A 354-amino-acid polypeptide reads, in one-letter code: Chorismate synthase (354 aa).

Position 48 (Arg48) interacts with NADP(+). Residues 125–127 (RSS), 239–240 (NA), Gly280, 295–299 (KPVAT), and Arg321 each bind FMN.

The protein belongs to the chorismate synthase family. Homotetramer. Requires FMNH2 as cofactor.

It catalyses the reaction 5-O-(1-carboxyvinyl)-3-phosphoshikimate = chorismate + phosphate. Its pathway is metabolic intermediate biosynthesis; chorismate biosynthesis; chorismate from D-erythrose 4-phosphate and phosphoenolpyruvate: step 7/7. Its function is as follows. Catalyzes the anti-1,4-elimination of the C-3 phosphate and the C-6 proR hydrogen from 5-enolpyruvylshikimate-3-phosphate (EPSP) to yield chorismate, which is the branch point compound that serves as the starting substrate for the three terminal pathways of aromatic amino acid biosynthesis. This reaction introduces a second double bond into the aromatic ring system. The chain is Chorismate synthase from Christiangramia forsetii (strain DSM 17595 / CGMCC 1.15422 / KT0803) (Gramella forsetii).